The sequence spans 278 residues: Undecaprenyl-diphosphatase 1 (278 aa).

Transmembrane regions (helical) follow at residues 1–21 (MFFG…TEFL), 43–63 (AFTT…VVLL), 83–103 (IWAT…IGFL), 112–132 (LMNW…FIFI), 192–212 (FSFF…IGSY), 224–244 (IVIL…VIKW), and 257–277 (FGWY…IGII).

The protein belongs to the UppP family.

It is found in the cell membrane. The enzyme catalyses di-trans,octa-cis-undecaprenyl diphosphate + H2O = di-trans,octa-cis-undecaprenyl phosphate + phosphate + H(+). Catalyzes the dephosphorylation of undecaprenyl diphosphate (UPP). Confers resistance to bacitracin. The polypeptide is Undecaprenyl-diphosphatase 1 (Oenococcus oeni (strain ATCC BAA-331 / PSU-1)).